The sequence spans 601 residues: uncharacterized protein (601 aa).

The segment at 127 to 364 (SSLFSSGSPP…PAFANDDTVH (238 aa)) is disordered. Over residues 128 to 137 (SLFSSGSPPD) the composition is skewed to polar residues. The span at 141 to 154 (RNSTSNLSSVSTNS) shows a compositional bias: low complexity. Polar residues-rich tracts occupy residues 159-177 (TIGSNYNMLQSTKSTASQR), 199-213 (ALSSPTQGASSNVTP), and 232-250 (SATNEANKLSDIQTSSPSQ). Residues serine 247 and serine 281 each carry the phosphoserine modification. A compositionally biased stretch (low complexity) spans 265–281 (SLSSSPSSEDSDLSLSS). Basic and acidic residues-rich tracts occupy residues 286–296 (DEKKQPSKSEK) and 313–325 (GSKEQNRIAKEKA). Serine 335 is modified (phosphoserine). The span at 338-356 (DTSTEYDSNSLRRSRSNPA) shows a compositional bias: polar residues.

This is an uncharacterized protein from Schizosaccharomyces pombe (strain 972 / ATCC 24843) (Fission yeast).